A 233-amino-acid polypeptide reads, in one-letter code: Large ribosomal subunit protein uL1 (233 aa).

Belongs to the universal ribosomal protein uL1 family. As to quaternary structure, part of the 50S ribosomal subunit.

In terms of biological role, binds directly to 23S rRNA. The L1 stalk is quite mobile in the ribosome, and is involved in E site tRNA release. Its function is as follows. Protein L1 is also a translational repressor protein, it controls the translation of the L11 operon by binding to its mRNA. The protein is Large ribosomal subunit protein uL1 of Aeromonas salmonicida (strain A449).